Here is a 61-residue protein sequence, read N- to C-terminus: [Val1,Thr6]-bradykinyl-Val,Asp (61 aa).

Residues 1-22 form the signal peptide; the sequence is MAFLKKSLFLVLFLGVVSLSFC. Positions 23-48 are excised as a propeptide; sequence EEEEREEHEEEKREAEAAESAENLIS. Residues 27-61 are disordered; it reads REEHEEEKREAEAAESAENLISKRVPPGFTPFRVD.

As to expression, expressed by the skin glands. Expression levels in inguinal glands and granular glands are virtually the same.

It is found in the secreted. In terms of biological role, induces contraction of rat ileum smooth muscle (EC(50)=2.73 uM) but has no activity towards rat smooth muscle from tail artery, urinary bladder or uterus. Binds to both bradykinin receptor B1 (BDKRB1) and B2 (BDKRB2); the effect via BDKRB1 is stronger. In Physalaemus nattereri (Cuyaba dwarf frog), this protein is [Val1,Thr6]-bradykinyl-Val,Asp.